The primary structure comprises 528 residues: Phosphoenolpyruvate carboxykinase (ATP) (528 aa).

Substrate-binding residues include Arg56, Tyr192, and Lys198. ATP contacts are provided by residues Lys198, His217, and 233–241 (GLSGTGKTT). The Mn(2+) site is built by Lys198 and His217. Asp254 contacts Mn(2+). 3 residues coordinate ATP: Glu282, Arg319, and Thr444. Arg319 provides a ligand contact to substrate.

The protein belongs to the phosphoenolpyruvate carboxykinase (ATP) family. Requires Mn(2+) as cofactor.

The protein localises to the cytoplasm. The enzyme catalyses oxaloacetate + ATP = phosphoenolpyruvate + ADP + CO2. Its pathway is carbohydrate biosynthesis; gluconeogenesis. Functionally, involved in the gluconeogenesis. Catalyzes the conversion of oxaloacetate (OAA) to phosphoenolpyruvate (PEP) through direct phosphoryl transfer between the nucleoside triphosphate and OAA. In Bacillus mycoides (strain KBAB4) (Bacillus weihenstephanensis), this protein is Phosphoenolpyruvate carboxykinase (ATP).